Consider the following 129-residue polypeptide: Small ribosomal subunit protein uS11 (129 aa).

This sequence belongs to the universal ribosomal protein uS11 family. In terms of assembly, part of the 30S ribosomal subunit. Interacts with proteins S7 and S18. Binds to IF-3.

Functionally, located on the platform of the 30S subunit, it bridges several disparate RNA helices of the 16S rRNA. Forms part of the Shine-Dalgarno cleft in the 70S ribosome. This Bradyrhizobium sp. (strain ORS 278) protein is Small ribosomal subunit protein uS11.